Here is a 779-residue protein sequence, read N- to C-terminus: FAD-dependent monooxygenase BOA8 (779 aa).

FAD is bound by residues Glu-85, Arg-128, Asp-331, and Ala-344. 7 consecutive transmembrane segments (helical) span residues 471–491 (AQLALPLILIALWFFWKKTPE), 504–524 (VKLDMLSSIANAIPFATIWTI), 542–562 (AFLLLAQKLGIELVAPIYFFF), 587–607 (ILPLAILSIFLGPSYCIWSSI), 618–638 (NAWYWYPVYLTMFLRILKFIV), 665–685 (ILICAAFYLYGSLSSSTSIAF), and 742–762 (LILTIXLSSTFLAGPGVGLIV).

Belongs to the paxM FAD-dependent monooxygenase family. FAD is required as a cofactor.

It is found in the membrane. Its pathway is polyketide biosynthesis. In terms of biological role, FAD-dependent monooxygenase; part of the gene cluster B that mediates the biosynthesis of botcinic acid and its botcinin derivatives, acetate-derived polyketides that contribute to virulence when combined with the sesquiterpene botrydial. Botcinic acid and its derivatives have been shown to induce chlorosis and necrosis during host plant infection, but also have antifungal activities. Two polyketide synthases, BOA6 and BOA9, are involved in the biosynthesis of botcinins. BOA6 mediates the formation of the per-methylated tetraketide core by condensation of four units of malonyl-CoA with one unit of acetyl-CoA, which would be methylated in activated methylene groups to yield a bicyclic acid intermediate that could then either be converted to botrylactone derivatives or lose the starter acetate unit through a retro-Claisen type C-C bond cleavage to yield botcinin derivatives. The second polyketide synthase, BOA9, is probably required for the biosynthesis of the tetraketide side chain of botcinins. The methyltransferase (MT) domain within BOA6 is probably responsible for the incorporation of four methyl groups. The trans-enoyl reductase BOA5 might take over the enoyl reductase function of BOA6 that misses an ER domain. The monooxygenases BOA2, BOA3 and BOA4 might be involved in further hydroxylations at C4, C5 and C8, whereas BOA7, close to BOA9, could potentially be involved in the hydroxylation at C4 in the side chain of botcinins. In Botryotinia fuckeliana (strain B05.10) (Noble rot fungus), this protein is FAD-dependent monooxygenase BOA8.